A 334-amino-acid chain; its full sequence is Nucleoid-associated protein PFL_1060 (334 aa).

It belongs to the YejK family.

Its subcellular location is the cytoplasm. The protein localises to the nucleoid. The sequence is that of Nucleoid-associated protein PFL_1060 from Pseudomonas fluorescens (strain ATCC BAA-477 / NRRL B-23932 / Pf-5).